Consider the following 803-residue polypeptide: Putative metal ion transporter C27B12.12c (803 aa).

Positions 1-20 (MSFQQPSNGAQGGNNNALEK) are enriched in polar residues. Residues 1–255 (MSFQQPSNGA…SSDVSGSDEN (255 aa)) are disordered. A compositionally biased stretch (low complexity) spans 21-45 (TSSNEATSSSSTQVSSLSASGISVS). Residues 58 to 82 (MQVQSSQHLEANVQSPVSSQTTYAT) show a composition bias toward polar residues. Composition is skewed to basic residues over residues 105–123 (KPKKKKRSRRNRKASRKKI) and 152–166 (QSNKKHRGRRVKHSP). Low complexity-rich tracts occupy residues 181–194 (ALSASMGSSSQHAS) and 218–253 (SSSSDSLYSVSSMSIKNDSNSDSLSSSSSSDVSGSD). Phosphoserine is present on Ser-318. 2 disordered regions span residues 326–349 (PRLKSTHSSIADNEDREVDSQVDE) and 406–431 (FEPHWNDLSPHDPNDPSSSLHSNNAE). Residues 337–347 (DNEDREVDSQV) show a composition bias toward acidic residues. Over residues 406-419 (FEPHWNDLSPHDPN) the composition is skewed to basic and acidic residues. Positions 420 to 430 (DPSSSLHSNNA) are enriched in polar residues. 2 positions are modified to phosphoserine: Ser-449 and Ser-452. Transmembrane regions (helical) follow at residues 745-765 (ITLIGTLLVPMNLVTGLFGMN) and 776-796 (LAWFFGILGVLLGSIAIGWII).

It belongs to the CorA metal ion transporter (MIT) (TC 1.A.35) family.

The protein localises to the cytoplasm. Its subcellular location is the membrane. The polypeptide is Putative metal ion transporter C27B12.12c (Schizosaccharomyces pombe (strain 972 / ATCC 24843) (Fission yeast)).